Consider the following 232-residue polypeptide: Large ribosomal subunit protein uL1 (232 aa).

The protein belongs to the universal ribosomal protein uL1 family. As to quaternary structure, part of the 50S ribosomal subunit.

Binds directly to 23S rRNA. The L1 stalk is quite mobile in the ribosome, and is involved in E site tRNA release. Functionally, protein L1 is also a translational repressor protein, it controls the translation of the L11 operon by binding to its mRNA. The polypeptide is Large ribosomal subunit protein uL1 (Christiangramia forsetii (strain DSM 17595 / CGMCC 1.15422 / KT0803) (Gramella forsetii)).